The following is a 147-amino-acid chain: D-aminoacyl-tRNA deacylase (147 aa).

The short motif at Gly-136–Pro-137 is the Gly-cisPro motif, important for rejection of L-amino acids element.

This sequence belongs to the DTD family. In terms of assembly, homodimer.

It is found in the cytoplasm. It carries out the reaction glycyl-tRNA(Ala) + H2O = tRNA(Ala) + glycine + H(+). The catalysed reaction is a D-aminoacyl-tRNA + H2O = a tRNA + a D-alpha-amino acid + H(+). In terms of biological role, an aminoacyl-tRNA editing enzyme that deacylates mischarged D-aminoacyl-tRNAs. Also deacylates mischarged glycyl-tRNA(Ala), protecting cells against glycine mischarging by AlaRS. Acts via tRNA-based rather than protein-based catalysis; rejects L-amino acids rather than detecting D-amino acids in the active site. By recycling D-aminoacyl-tRNA to D-amino acids and free tRNA molecules, this enzyme counteracts the toxicity associated with the formation of D-aminoacyl-tRNA entities in vivo and helps enforce protein L-homochirality. The polypeptide is D-aminoacyl-tRNA deacylase (Sulfurihydrogenibium sp. (strain YO3AOP1)).